The chain runs to 156 residues: Cyclin-dependent kinase inhibitor 2A (156 aa).

N-acetylmethionine is present on Met1. Phosphoserine is present on residues Ser7 and Ser8. ANK repeat units follow at residues 11–40 (PSADWLATAAARGRVEEVRALLEAGALPNA), 44–72 (YGRRPIQVMMMGSARVAELLLLHGAEPNC), 77–106 (TLTRPVHDAAREGFLDTLVVLHRAGARLDV), and 110–139 (WGRLPVDLAEELGHRDVARYLRAAAGGTRG). Phosphoserine occurs at positions 140 and 152.

Belongs to the CDKN2 cyclin-dependent kinase inhibitor family. In terms of assembly, heterodimer with CDK4 or CDK6. Predominant p16 complexes contained CDK6. Interacts with CDK4 (both 'T-172'-phosphorylated and non-phosphorylated forms); the interaction inhibits cyclin D-CDK4 kinase activity. Interacts with ISCO2. Phosphorylation seems to increase interaction with CDK4. Widely expressed but not detected in brain or skeletal muscle. Isoform 3 is pancreas-specific.

Its subcellular location is the cytoplasm. It localises to the nucleus. Its function is as follows. Acts as a negative regulator of the proliferation of normal cells by interacting strongly with CDK4 and CDK6. This inhibits their ability to interact with cyclins D and to phosphorylate the retinoblastoma protein. This chain is Cyclin-dependent kinase inhibitor 2A, found in Homo sapiens (Human).